The sequence spans 185 residues: Ribosome-recycling factor (185 aa).

It belongs to the RRF family.

The protein resides in the cytoplasm. Responsible for the release of ribosomes from messenger RNA at the termination of protein biosynthesis. May increase the efficiency of translation by recycling ribosomes from one round of translation to another. The chain is Ribosome-recycling factor from Pseudothermotoga lettingae (strain ATCC BAA-301 / DSM 14385 / NBRC 107922 / TMO) (Thermotoga lettingae).